A 155-amino-acid polypeptide reads, in one-letter code: Aspartate carbamoyltransferase regulatory chain (155 aa).

Zn(2+) contacts are provided by Cys-113, Cys-118, Cys-139, and Cys-142.

It belongs to the PyrI family. As to quaternary structure, contains catalytic and regulatory chains. Requires Zn(2+) as cofactor.

Its function is as follows. Involved in allosteric regulation of aspartate carbamoyltransferase. This Methanoculleus marisnigri (strain ATCC 35101 / DSM 1498 / JR1) protein is Aspartate carbamoyltransferase regulatory chain.